Here is a 265-residue protein sequence, read N- to C-terminus: Lipopolysaccharide core heptose(I) kinase WaaP (265 aa).

The active site involves D162.

It belongs to the protein kinase superfamily. KdkA/RfaP family. The cofactor is Mg(2+).

Its subcellular location is the cell inner membrane. The catalysed reaction is an L-alpha-D-Hep-(1-&gt;3)-L-alpha-D-Hep-(1-&gt;5)-[alpha-Kdo-(2-&gt;4)]-alpha-Kdo-(2-&gt;6)-lipid A + ATP = an L-alpha-D-Hep-(1-&gt;3)-4-O-phospho-L-alpha-D-Hep-(1-&gt;5)-[alpha-Kdo-(2-&gt;4)]-alpha-Kdo-(2-&gt;6)-lipid A + ADP + H(+). It carries out the reaction L-alpha-D-Hep-(1-&gt;3)-L-alpha-D-Hep-(1-&gt;5)-[alpha-Kdo-(2-&gt;4)]-alpha-Kdo-(2-&gt;6)-lipid A (E. coli) + ATP = L-alpha-D-Hep-(1-&gt;3)-4-O-phospho-L-alpha-D-Hep-(1-&gt;5)-[alpha-Kdo-(2-&gt;4)]-alpha-Kdo-(2-&gt;6)-lipid A (E. coli) + ADP + H(+). It functions in the pathway bacterial outer membrane biogenesis; LPS core biosynthesis. Kinase involved in the biosynthesis of the core oligosaccharide region of lipopolysaccharide (LPS). Catalyzes the phosphorylation of heptose I (HepI), the first heptose added to the Kdo2-lipid A module. The polypeptide is Lipopolysaccharide core heptose(I) kinase WaaP (Escherichia coli).